The following is a 201-amino-acid chain: Thymidylate kinase (201 aa).

Position 7 to 14 (7 to 14 (GIDGSGKS)) interacts with ATP.

It belongs to the thymidylate kinase family.

The catalysed reaction is dTMP + ATP = dTDP + ADP. In terms of biological role, phosphorylation of dTMP to form dTDP in both de novo and salvage pathways of dTTP synthesis. The protein is Thymidylate kinase of Thermosipho africanus (strain TCF52B).